Reading from the N-terminus, the 389-residue chain is Type 2 DNA topoisomerase 6 subunit A (389 aa).

The region spanning Glu12–Lys162 is the Topo IIA-type catalytic domain. Tyr106 (O-(5'-phospho-DNA)-tyrosine intermediate) is an active-site residue. Mg(2+) contacts are provided by Glu209 and Asp261.

This sequence belongs to the TOP6A family. In terms of assembly, homodimer. Heterotetramer of two Top6A and two Top6B chains. Requires Mg(2+) as cofactor.

It carries out the reaction ATP-dependent breakage, passage and rejoining of double-stranded DNA.. With respect to regulation, not inhibited by the DNA gyrase inhibitor novobiocin, instead inhibited by eukaryotic topoisomerase inhibitors such as m- and o-amsacrine, ellipticine, and the quinolone CP-115,953. In terms of biological role, relaxes both positive and negative supercoils and exhibits a strong decatenase and unknotting activity; it cannot introduce DNA supercoils. ATP is absolutely required for DNA cleavage; the nonhydrolyzable analog AMP-PNP generates nicked or linear products from a supercoiled dsDNA substrate. Generates staggered two-nucleotide long 5' overhangs. The enzyme is covalently attached transiently to the 5'-ends of the cleaved strands. The chain is Type 2 DNA topoisomerase 6 subunit A from Saccharolobus shibatae (strain ATCC 51178 / DSM 5389 / JCM 8931 / NBRC 15437 / B12) (Sulfolobus shibatae).